A 327-amino-acid polypeptide reads, in one-letter code: MRPLSLKGHERALTRVRFNREGDLTFSCAKDKKPCVWYTENGERIGSYDGHNGAVWDIDVSWDTTKCVTASGDLTVKIWDAELGNCLYTINHQTPMKSCGFSYSGNLVCFTTQKMTKNLSTFQVRDLRDSSQMVEGGESFFYSQFDVNATTALFTQMDDLVTIGFESGLLQQYDLRNPDTPIHTNESVHRYSVQDLQLSPRGDFLISASRDKTAALLDVNDLKKLKQYKSERPVNSACISPNRDHICLGGGEDAMQVTQTSVSAGHFEAKIYHMVFEEEFARFKGHFGPINTMAWHPSGTIIATGGEDGYIRIQEFDEDYLGFTYDF.

5 WD repeats span residues 8–49 (GHER…GSYD), 51–89 (HNGA…CLYT), 188–227 (VHRY…KLKQ), 229–268 (KSER…GHFE), and 285–324 (GHFG…LGFT).

The protein belongs to the eIF-3 subunit I family. Component of the eukaryotic translation initiation factor 3 (eIF-3) complex.

The protein localises to the cytoplasm. In terms of biological role, component of the eukaryotic translation initiation factor 3 (eIF-3) complex, which is involved in protein synthesis of a specialized repertoire of mRNAs and, together with other initiation factors, stimulates binding of mRNA and methionyl-tRNAi to the 40S ribosome. The eIF-3 complex specifically targets and initiates translation of a subset of mRNAs involved in cell proliferation. The sequence is that of Eukaryotic translation initiation factor 3 subunit I from Caenorhabditis elegans.